Consider the following 401-residue polypeptide: Serine/threonine transporter SstT (401 aa).

The next 8 membrane-spanning stretches (helical) occupy residues 17–37, 40–60, 78–98, 138–158, 179–199, 212–232, 295–315, and 336–356; these read IGIG…ITVI, FGSL…LTLV, VICL…GASY, ALAT…GLAF, VVGW…FDTI, LLLL…NPLI, MAGA…TLGI, and ASGV…LFGI.

Belongs to the dicarboxylate/amino acid:cation symporter (DAACS) (TC 2.A.23) family.

Its subcellular location is the cell membrane. It catalyses the reaction L-serine(in) + Na(+)(in) = L-serine(out) + Na(+)(out). The enzyme catalyses L-threonine(in) + Na(+)(in) = L-threonine(out) + Na(+)(out). In terms of biological role, involved in the import of serine and threonine into the cell, with the concomitant import of sodium (symport system). The polypeptide is Serine/threonine transporter SstT (Streptococcus suis (strain 98HAH33)).